The sequence spans 713 residues: Calpain-1 catalytic subunit (713 aa).

Positions L55–T354 constitute a Calpain catalytic domain. Catalysis depends on residues C115, H272, and N296. Residue T354 is modified to Phosphothreonine. The domain III stretch occupies residues P355 to D525. Positions Q526–E541 are linker. Positions I542–F712 are domain IV. EF-hand domains lie at D557–K575, F584–F609, N614–K649, and V679–A713. Ca(2+) contacts are provided by D597, D599, N601, K603, E608, D627, D629, S631, S633, and E638.

This sequence belongs to the peptidase C2 family. As to quaternary structure, forms a heterodimer with a small (regulatory) subunit CAPNS1. Ca(2+) is required as a cofactor. Undergoes calcium-induced successive autoproteolytic cleavages that generate a membrane-bound 78 kDa active form and an intracellular 75 kDa active form. Calpastatin reduces with high efficiency the transition from 78 kDa to 75 kDa calpain forms.

Its subcellular location is the cytoplasm. The protein localises to the cell membrane. It carries out the reaction Broad endopeptidase specificity.. With respect to regulation, activated by micromolar concentrations of calcium and inhibited by calpastatin. Its function is as follows. Calcium-regulated non-lysosomal thiol-protease which catalyzes limited proteolysis of substrates involved in cytoskeletal remodeling and signal transduction. Proteolytically cleaves CTBP1 at 'Asn-364', 'Gly-377' and 'His-399'. Cleaves and activates caspase-7 (CASP7). In Rattus norvegicus (Rat), this protein is Calpain-1 catalytic subunit.